The sequence spans 544 residues: Serine/threonine-protein kinase PAK 1 (544 aa).

The interval 1–77 (MSNNGLDIQD…KEKERPEISL (77 aa)) is disordered. Ser2 carries the post-translational modification N-acetylserine. Position 21 is a phosphoserine; by PKB and autocatalysis (Ser21). Basic and acidic residues predominate over residues 68-77 (KEKERPEISL). An autoregulatory region region spans residues 70–140 (KERPEISLPS…YNSKKTSNSQ (71 aa)). In terms of domain architecture, CRIB spans 75–88 (ISLPSDFEHTIHVG). Residues 75 to 105 (ISLPSDFEHTIHVGFDAVTGEFTGMPEQWAR) form a GTPase-binding region. Thr84 is subject to Phosphothreonine; by OXSR1. Ser115 is subject to Phosphoserine. Phosphotyrosine occurs at positions 131 and 142. Phosphoserine; by autocatalysis occurs at positions 144 and 149. Phosphotyrosine; by JAK2 is present on Tyr153. The interval 161–193 (VKAVSETPAVPPVSEDEDDDDDGTPPPVIAPRP) is disordered. The residue at position 174 (Ser174) is a Phosphoserine. Residues 174-183 (SEDEDDDDDG) show a composition bias toward acidic residues. Thr184 bears the Phosphothreonine mark. Position 198 is a phosphoserine; by autocatalysis (Ser198). The residue at position 200 (Tyr200) is a Phosphotyrosine; by JAK2. Ser203 carries the phosphoserine; by autocatalysis modification. Phosphothreonine is present on residues Thr211 and Thr218. Positions 212-250 (PTRDVATSPISPTENNTTPPDALTRNTEKQKKKPKMSDE) are disordered. Phosphoserine occurs at positions 219 and 222. Positions 219-230 (SPISPTENNTTP) are enriched in polar residues. Phosphothreonine occurs at positions 224, 228, and 229. A Protein kinase domain is found at 269–520 (YTRFEKIGQG…AKELLQHQFL (252 aa)). Residue 275 to 283 (IGQGASGTV) coordinates ATP. Tyr284 carries the post-translational modification Phosphotyrosine; by JAK2. Lys298 serves as a coordination point for ATP. Residue Asp388 is the Proton acceptor of the active site. Thr422 carries the phosphothreonine; by autocatalysis, BRSK2 and PDPK1 modification.

The protein belongs to the protein kinase superfamily. STE Ser/Thr protein kinase family. STE20 subfamily. As to quaternary structure, homodimer in its autoinhibited state. Active as monomer. Interacts with GIT1. Component of cytoplasmic complexes, which also contains PXN, ARHGEF7 and GIT1. Interacts with NISCH. Interacts with DVL1; mediates the formation of a DVL1, MUSK and PAK1 ternary complex involved in AChR clustering. Binds to the caspase-cleaved p110 isoform of CDC2L1 and CDC2L2, p110C, but not the full-length proteins. Interacts with ARHGEF7. Interacts tightly with GTP-bound but not GDP-bound CDC42/P21 and RAC1. Probably found in a ternary complex composed of DSCAM, PAK1 and RAC1. Interacts with DSCAM (via cytoplasmic domain); the interaction is direct and enhanced in presence of RAC1. Interacts with SCRIB. Interacts with PDPK1. Interacts (via kinase domain) with RAF1. Interacts with NCK1 and NCK2. Interacts with TBCB. Interacts with BRSK2. Interacts with SNAI1. Interacts with CIB1 (via N-terminal region); the interaction is direct, promotes PAK1 activity and occurs in a calcium-dependent manner. Interacts with INPP5K. Interacts with gamma-tubulin. Interacts with RHOU; the interaction promotes PAK1 activation. The cofactor is Mg(2+). Post-translationally, autophosphorylated in trans, meaning that in a dimer, one kinase molecule phosphorylates the other one. Activated by autophosphorylation at Thr-422 in response to a conformation change, triggered by interaction with GTP-bound CDC42 or RAC1. Activated by phosphorylation at Thr-422 by BRSK2 and by PDPK1. Phosphorylated by JAK2 in response to PRL; this increases PAK1 kinase activity. Phosphorylated at Ser-21 by PKB/AKT; this reduces interaction with NCK1 and association with focal adhesion sites. Upon DNA damage, phosphorylated at Thr-211 and translocates to the nucleoplasm. Phosphorylated at tyrosine residues, which can be enhanced by NTN1.

The protein localises to the cytoplasm. The protein resides in the cell junction. It localises to the focal adhesion. Its subcellular location is the cell projection. It is found in the lamellipodium. The protein localises to the cell membrane. The protein resides in the ruffle membrane. It localises to the invadopodium. Its subcellular location is the nucleus. It is found in the nucleoplasm. The protein localises to the chromosome. The protein resides in the cytoskeleton. It localises to the microtubule organizing center. Its subcellular location is the centrosome. It carries out the reaction L-seryl-[protein] + ATP = O-phospho-L-seryl-[protein] + ADP + H(+). The catalysed reaction is L-threonyl-[protein] + ATP = O-phospho-L-threonyl-[protein] + ADP + H(+). Phosphorylation of Thr-84 by OXSR1 inhibits activation. Activated by binding small G proteins. Binding of GTP-bound CDC42 or RAC1 to the autoregulatory region releases monomers from the autoinhibited dimer, and enables activation by phosphorylation of Thr-422. Protein kinase involved in intracellular signaling pathways downstream of integrins and receptor-type kinases that plays an important role in cytoskeleton dynamics, in cell adhesion, migration, proliferation, apoptosis, mitosis, and in vesicle-mediated transport processes. Can directly phosphorylate BAD and protects cells against apoptosis. Activated by interaction with CDC42 and RAC1. Functions as a GTPase effector that links the Rho-related GTPases CDC42 and RAC1 to the JNK MAP kinase pathway. Phosphorylates and activates MAP2K1, and thereby mediates activation of downstream MAP kinases. Involved in the reorganization of the actin cytoskeleton, actin stress fibers and of focal adhesion complexes. Phosphorylates the tubulin chaperone TBCB and thereby plays a role in the regulation of microtubule biogenesis and organization of the tubulin cytoskeleton. Plays a role in the regulation of insulin secretion in response to elevated glucose levels. Part of a ternary complex that contains PAK1, DVL1 and MUSK that is important for MUSK-dependent regulation of AChR clustering during the formation of the neuromuscular junction (NMJ). Activity is inhibited in cells undergoing apoptosis, potentially due to binding of CDC2L1 and CDC2L2. Phosphorylates MYL9/MLC2. Phosphorylates RAF1 at 'Ser-338' and 'Ser-339' resulting in: activation of RAF1, stimulation of RAF1 translocation to mitochondria, phosphorylation of BAD by RAF1, and RAF1 binding to BCL2. Phosphorylates SNAI1 at 'Ser-246' promoting its transcriptional repressor activity by increasing its accumulation in the nucleus. In podocytes, promotes NR3C2 nuclear localization. Required for atypical chemokine receptor ACKR2-induced phosphorylation of LIMK1 and cofilin (CFL1) and for the up-regulation of ACKR2 from endosomal compartment to cell membrane, increasing its efficiency in chemokine uptake and degradation. In synapses, seems to mediate the regulation of F-actin cluster formation performed by SHANK3, maybe through CFL1 phosphorylation and inactivation. Plays a role in RUFY3-mediated facilitating gastric cancer cells migration and invasion. In response to DNA damage, phosphorylates MORC2 which activates its ATPase activity and facilitates chromatin remodeling. In neurons, plays a crucial role in regulating GABA(A) receptor synaptic stability and hence GABAergic inhibitory synaptic transmission through its role in F-actin stabilization. In hippocampal neurons, necessary for the formation of dendritic spines and excitatory synapses; this function is dependent on kinase activity and may be exerted by the regulation of actomyosin contractility through the phosphorylation of myosin II regulatory light chain (MLC). Along with GIT1, positively regulates microtubule nucleation during interphase. Phosphorylates FXR1, promoting its localization to stress granules and activity. Phosphorylates ILK on 'Thr-173' and 'Ser-246', promoting nuclear export of ILK. The protein is Serine/threonine-protein kinase PAK 1 of Bos taurus (Bovine).